Consider the following 30-residue polypeptide: Bowman-Birk type proteinase inhibitor 3 (30 aa).

Intrachain disulfides connect C9–C24 and C14–C22.

Its function is as follows. Inhibits trypsin (IC(50)=4.90 nM) and, to a lesser extent, alpha-chymotrypsin (IC(50)=1.87 uM). The sequence is that of Bowman-Birk type proteinase inhibitor 3 from Lathyrus sativus (White vetchling).